A 400-amino-acid polypeptide reads, in one-letter code: Cytohesin-3 (400 aa).

Positions 14 to 61 (EDLSLEEREELLDIRRRKKELIDDIERLKYEIAEVMTEIDNLTSVEES) form a coiled coil. The region spanning 77-206 (FNMDPKKGIQ…IIMLNTSLHN (130 aa)) is the SEC7 domain. The PH domain maps to 264-381 (NPDREGWLLK…WMKSIKASIS (118 aa)). A 1,2-diacyl-sn-glycero-3-phospho-(1D-myo-inositol-3,4,5-trisphosphate)-binding positions include 273–281 (KLGGGRVKT), R285, Y296, R306, and N355. The interval 392–400 (RKRRIANKK) is C-terminal autoinhibitory region.

Interacts with TAMALIN. Interacts with ARF6. Interacts with FRMD4A. Interacts with FRMD4B. Almost absent from liver, thymus and peripheral blood lymphocytes.

Its subcellular location is the cytoplasm. The protein localises to the cytosol. It localises to the cell membrane. The protein resides in the cell junction. It is found in the adherens junction. Its subcellular location is the tight junction. Its function is as follows. Promotes guanine-nucleotide exchange on ARF1 and ARF6. Promotes the activation of ARF factors through replacement of GDP with GTP. Plays a role in the epithelial polarization. The chain is Cytohesin-3 from Homo sapiens (Human).